Reading from the N-terminus, the 677-residue chain is MTQVAKKILVTCALPYANGSIHLGHMLEHIQADVWVRYQRMRGHEVNFICADDAHGTPIMLKAQQLGITPEQMIGEMSQEHQTDFAGFNISYDNYHSTHSEENRQLSELIYSRLKENGFIKNRTISQLYDPEKGMFLPDRFVKGTCPKCKSPDQYGDNCEVCGATYSPTELIEPKSVVSGATPVMRDSEHFFFDLPSFSEMLQAWTRSGALQEQVANKMQEWFESGLQQWDISRDAPYFGFEIPNAPGKYFYVWLDAPIGYMGSFKNLCDKRGDSVSFDEYWKKDSTAELYHFIGKDIVYFHSLFWPAMLEGSNFRKPTNLFVHGYVTVNGAKMSKSRGTFIKASTWLNHFDADSLRYYYTAKLSSRIDDIDLNLEDFVQRVNADIVNKVVNLASRNAGFINKRFDGVLASELADPELYKTFTDAAEVIGEAWESREFGKAVREIMALADLANRYVDEQAPWVVAKQEGRDADLQAICSMGINLFRVLMTYLKPVLPKLTERAEAFLNTELTWDGIQQPLLGHKVNPFKALYNRIDMKQVEALVEASKEEVKATTAPVTGPLADDPIQETITFDDFAKVDLRVALIENAEFVEGSDKLLRLTLDLGGEKRNVFSGIRSAYPDPQALIGRHTIMVANLAPRKMRFGISEGMVMAAGPGGKDIFLLSPDAGAKPGHQVK.

Positions Pro-15–His-25 match the 'HIGH' region motif. The Zn(2+) site is built by Cys-146, Cys-149, Cys-159, and Cys-162. The 'KMSKS' region signature appears at Lys-333 to Ser-337. Lys-336 contributes to the ATP binding site. Residues Asp-575–Lys-677 form the tRNA-binding domain.

Belongs to the class-I aminoacyl-tRNA synthetase family. MetG type 1 subfamily. As to quaternary structure, homodimer. Zn(2+) serves as cofactor.

The protein localises to the cytoplasm. The enzyme catalyses tRNA(Met) + L-methionine + ATP = L-methionyl-tRNA(Met) + AMP + diphosphate. Functionally, is required not only for elongation of protein synthesis but also for the initiation of all mRNA translation through initiator tRNA(fMet) aminoacylation. The polypeptide is Methionine--tRNA ligase (Shigella flexneri serotype 5b (strain 8401)).